Consider the following 358-residue polypeptide: Protein FAM50 homolog (358 aa).

The segment covering 104-113 has biased composition (basic and acidic residues); it reads AKLAEKDRQK. The segment at 104–151 is disordered; that stretch reads AKLAEKDRQKRQIQALSFDPDDEPDGDDANDGDEGSGKESEKEDVKEE. The segment covering 122–137 has biased composition (acidic residues); the sequence is DPDDEPDGDDANDGDE. The span at 138–151 shows a compositional bias: basic and acidic residues; sequence GSGKESEKEDVKEE.

It belongs to the FAM50 family.

The protein is Protein FAM50 homolog of Anopheles gambiae (African malaria mosquito).